Consider the following 420-residue polypeptide: Gamma-glutamyl phosphate reductase (420 aa).

The protein belongs to the gamma-glutamyl phosphate reductase family.

Its subcellular location is the cytoplasm. The catalysed reaction is L-glutamate 5-semialdehyde + phosphate + NADP(+) = L-glutamyl 5-phosphate + NADPH + H(+). It participates in amino-acid biosynthesis; L-proline biosynthesis; L-glutamate 5-semialdehyde from L-glutamate: step 2/2. In terms of biological role, catalyzes the NADPH-dependent reduction of L-glutamate 5-phosphate into L-glutamate 5-semialdehyde and phosphate. The product spontaneously undergoes cyclization to form 1-pyrroline-5-carboxylate. The protein is Gamma-glutamyl phosphate reductase of Streptococcus pneumoniae (strain JJA).